The chain runs to 540 residues: Phosphoenolpyruvate carboxykinase (ATP) (540 aa).

Arg65 provides a ligand contact to substrate. At Lys87 the chain carries N6-acetyllysine. The substrate site is built by Tyr207 and Lys213. ATP is bound by residues Lys213, His232, and 248-256; that span reads GLSGTGKTT. The Mn(2+) site is built by Lys213 and His232. Asp269 serves as a coordination point for Mn(2+). Residues Glu297, Arg333, 449–450, and Thr455 each bind ATP; that span reads RI. Arg333 contributes to the substrate binding site. Lys523 carries the N6-acetyllysine modification.

This sequence belongs to the phosphoenolpyruvate carboxykinase (ATP) family. In terms of assembly, monomer. Mn(2+) serves as cofactor.

The protein resides in the cytoplasm. It catalyses the reaction oxaloacetate + ATP = phosphoenolpyruvate + ADP + CO2. It functions in the pathway carbohydrate biosynthesis; gluconeogenesis. In terms of biological role, involved in the gluconeogenesis. Catalyzes the conversion of oxaloacetate (OAA) to phosphoenolpyruvate (PEP) through direct phosphoryl transfer between the nucleoside triphosphate and OAA. This is Phosphoenolpyruvate carboxykinase (ATP) from Escherichia coli O7:K1 (strain IAI39 / ExPEC).